Reading from the N-terminus, the 120-residue chain is uncharacterized protein (120 aa).

3 consecutive transmembrane segments (helical) span residues 20 to 39 (FFWP…CYLL), 52 to 71 (GSSL…LFSI), and 86 to 108 (ILVV…SIIG).

It localises to the cell membrane. This is an uncharacterized protein from Pasteurella multocida (strain Pm70).